A 316-amino-acid chain; its full sequence is Apolipoprotein E (316 aa).

An N-terminal signal peptide occupies residues 1-18 (MKVLWAALVVTLLAGCGA). Tandem repeats lie at residues 83-104 (ALMD…EQLG), 105-126 (PVTE…ARLG), 127-148 (ADME…AMVG), 149-170 (QSTE…KRLL), 171-192 (RDAE…EGAA), 193-214 (RSVN…TVHT), 215-232 (LVSK…QRLR), and 233-254 (GRLE…EQVQ). Residues 83–254 (ALMDDTMKEV…RLDEVREQVQ (172 aa)) are 8 X 22 AA approximate tandem repeats. The tract at residues 161–171 (HLRKLRKRLLR) is LDL and other lipoprotein receptors binding. 165–168 (LRKR) is a binding site for heparin. The lipid-binding and lipoprotein association stretch occupies residues 213-289 (HTLVSKPLQE…SWFEPLVQDM (77 aa)). 228–235 (AQRLRGRL) contributes to the heparin binding site. Positions 265-316 (NQVRLQAEAFQGRLKSWFEPLVQDMQQKWAELVEKVQLAVGAVPTSVPSEKQ) are homooligomerization. A specificity for association with VLDL region spans residues 277–289 (RLKSWFEPLVQDM).

It belongs to the apolipoprotein A1/A4/E family. In terms of assembly, homotetramer. May interact with ABCA1; functionally associated with ABCA1 in the biogenesis of HDLs. May interact with APP/A4 amyloid-beta peptide; the interaction is extremely stable in vitro but its physiological significance is unclear. May interact with MAPT. May interact with MAP2. In the cerebrospinal fluid, interacts with secreted SORL1. Interacts with PMEL; this allows the loading of PMEL luminal fragment on ILVs to induce fibril nucleation. In terms of processing, APOE exists as multiple glycosylated and sialylated glycoforms within cells and in plasma. The extent of glycosylation and sialylation are tissue and context specific. Post-translationally, glycated in plasma VLDL. Phosphorylated by FAM20C in the extracellular medium.

Its subcellular location is the secreted. The protein resides in the extracellular space. The protein localises to the extracellular matrix. It localises to the extracellular vesicle. It is found in the endosome. Its subcellular location is the multivesicular body. Its function is as follows. APOE is an apolipoprotein, a protein associating with lipid particles, that mainly functions in lipoprotein-mediated lipid transport between organs via the plasma and interstitial fluids. APOE is a core component of plasma lipoproteins and is involved in their production, conversion and clearance. Apolipoproteins are amphipathic molecules that interact both with lipids of the lipoprotein particle core and the aqueous environment of the plasma. As such, APOE associates with chylomicrons, chylomicron remnants, very low density lipoproteins (VLDL) and intermediate density lipoproteins (IDL) but shows a preferential binding to high-density lipoproteins (HDL). It also binds a wide range of cellular receptors including the LDL receptor/LDLR and the very low-density lipoprotein receptor/VLDLR that mediate the cellular uptake of the APOE-containing lipoprotein particles. Finally, APOE also has a heparin-binding activity and binds heparan-sulfate proteoglycans on the surface of cells, a property that supports the capture and the receptor-mediated uptake of APOE-containing lipoproteins by cells. The polypeptide is Apolipoprotein E (APOE) (Diceros bicornis (Black rhinoceros)).